We begin with the raw amino-acid sequence, 289 residues long: ATP synthase gamma chain (289 aa).

Belongs to the ATPase gamma chain family. F-type ATPases have 2 components, CF(1) - the catalytic core - and CF(0) - the membrane proton channel. CF(1) has five subunits: alpha(3), beta(3), gamma(1), delta(1), epsilon(1). CF(0) has three main subunits: a, b and c.

The protein localises to the cell inner membrane. In terms of biological role, produces ATP from ADP in the presence of a proton gradient across the membrane. The gamma chain is believed to be important in regulating ATPase activity and the flow of protons through the CF(0) complex. In Mannheimia succiniciproducens (strain KCTC 0769BP / MBEL55E), this protein is ATP synthase gamma chain.